The sequence spans 247 residues: Probable transcriptional regulatory protein ETA_14870 (247 aa).

Positions 1–20 are disordered; the sequence is MAGHSKWANTKHRKAAQDAK.

The protein belongs to the TACO1 family.

Its subcellular location is the cytoplasm. The polypeptide is Probable transcriptional regulatory protein ETA_14870 (Erwinia tasmaniensis (strain DSM 17950 / CFBP 7177 / CIP 109463 / NCPPB 4357 / Et1/99)).